Reading from the N-terminus, the 237-residue chain is MLTRKQHELLMFIHERIKEGGVSPSFDEMKEALDLRSKSGIHRLITALEERGFIRRLPHRARALEILKLPDAASPSLAMARGRGFSPSVIEGGAQPKPSSRDLAPARSSGDTMTLSVMGRIAAGTPIEALQEESHQVSVPLNLLGSGEHYALEVKGDSMIEAGILDGDTVLIQRCDTATSGDIVVALVDGYEATLKRLRKKGDSIALEAANPAYETRIFGPDRVKVQGKLVGLLRRY.

Positions 26 to 46 form a DNA-binding region, H-T-H motif; that stretch reads FDEMKEALDLRSKSGIHRLIT. Residues 84–110 form a disordered region; sequence GFSPSVIEGGAQPKPSSRDLAPARSSG. Residues S158 and K196 each act as for autocatalytic cleavage activity in the active site.

It belongs to the peptidase S24 family. In terms of assembly, homodimer.

It catalyses the reaction Hydrolysis of Ala-|-Gly bond in repressor LexA.. Its function is as follows. Represses a number of genes involved in the response to DNA damage (SOS response), including recA and lexA. In the presence of single-stranded DNA, RecA interacts with LexA causing an autocatalytic cleavage which disrupts the DNA-binding part of LexA, leading to derepression of the SOS regulon and eventually DNA repair. This chain is LexA repressor, found in Parvibaculum lavamentivorans (strain DS-1 / DSM 13023 / NCIMB 13966).